Here is a 188-residue protein sequence, read N- to C-terminus: Probable DNA-directed RNA polymerase subunit delta (188 aa).

Positions 14–83 (LSMIEVARAI…GENKWGLRSW (70 aa)) constitute an HTH HARE-type domain. The interval 119–188 (EDAIDYSADD…EDEEDEEEEE (70 aa)) is disordered.

It belongs to the RpoE family. RNAP is composed of a core of 2 alpha, a beta and a beta' subunits. The core is associated with a delta subunit and one of several sigma factors.

In terms of biological role, participates in both the initiation and recycling phases of transcription. In the presence of the delta subunit, RNAP displays an increased specificity of transcription, a decreased affinity for nucleic acids, and an increased efficiency of RNA synthesis because of enhanced recycling. This is Probable DNA-directed RNA polymerase subunit delta from Streptococcus equi subsp. equi (strain 4047).